A 363-amino-acid chain; its full sequence is UDP-3-O-acylglucosamine N-acyltransferase (363 aa).

Catalysis depends on H266, which acts as the Proton acceptor.

It belongs to the transferase hexapeptide repeat family. LpxD subfamily. Homotrimer.

It carries out the reaction a UDP-3-O-[(3R)-3-hydroxyacyl]-alpha-D-glucosamine + a (3R)-hydroxyacyl-[ACP] = a UDP-2-N,3-O-bis[(3R)-3-hydroxyacyl]-alpha-D-glucosamine + holo-[ACP] + H(+). It functions in the pathway bacterial outer membrane biogenesis; LPS lipid A biosynthesis. Catalyzes the N-acylation of UDP-3-O-acylglucosamine using 3-hydroxyacyl-ACP as the acyl donor. Is involved in the biosynthesis of lipid A, a phosphorylated glycolipid that anchors the lipopolysaccharide to the outer membrane of the cell. In Bordetella pertussis (strain Tohama I / ATCC BAA-589 / NCTC 13251), this protein is UDP-3-O-acylglucosamine N-acyltransferase.